The chain runs to 715 residues: MSKAHKPWPYRRRSQFSSRKYLKKEMNSFQQQPPPFGTVPPQMMFPPNWQGAEKDAAFLAKDFNFLTLNNQPPPGNRSQPRAMGPENNLYSQYEQKVRPCIDLIDSLRALGVEQDLALPAIAVIGDQSSGKSSVLEALSGVALPRGSGIVTRCPLVLKLKKQPCEAWAGRISYRNTELELQDPGQVEKEIHKAQNVMAGNGRGISHELISLEITSPEVPDLTIIDLPGITRVAVDNQPRDIGLQIKALIKKYIQRQQTINLVVVPCNVDIATTEALSMAHEVDPEGDRTIGILTKPDLMDRGTEKSVMNVVRNLTYPLKKGYMIVKCRGQQEITNRLSLAEATKKEITFFQTHPYFRVLLEEGSATVPRLAERLTTELIMHIQKSLPLLEGQIRESHQKATEELRRCGADIPSQEADKMFFLIEKIKMFNQDIEKLVEGEEVVRENETRLYNKIREDFKNWVGILATNTQKVKNIIHEEVEKYEKQYRGKELLGFVNYKTFEIIVHQYIQQLVEPALSMLQKAMEIIQQAFINVAKKHFGEFFNLNQTVQSTIEDIKVKHTAKAENMIQLQFRMEQMVFCQDQIYSVVLKKVREEIFNPLGTPSQNMKLNSHFPSNESSVSSFTEIGIHLNAYFLETSKRLANQIPFIIQYFMLRENGDSLQKAMMQILQEKNRYSWLLQEQSETATKRRILKERIYRLTQARHALCQFSSKEIH.

Positions 115–387 (DLALPAIAVI…LIMHIQKSLP (273 aa)) constitute a Dynamin-type G domain. The interval 125-132 (GDQSSGKS) is G1 motif. Position 125–132 (125–132 (GDQSSGKS)) interacts with GTP. The interval 150–152 (VTR) is G2 motif. The segment at 225-228 (DLPG) is G3 motif. GTP-binding positions include 225 to 229 (DLPGI) and 294 to 297 (TKPD). The segment at 294 to 297 (TKPD) is G4 motif. A G5 motif region spans residues 326–329 (KCRG). The 92-residue stretch at 623–714 (FTEIGIHLNA…ALCQFSSKEI (92 aa)) folds into the GED domain.

It belongs to the TRAFAC class dynamin-like GTPase superfamily. Dynamin/Fzo/YdjA family.

The protein localises to the cytoplasm. Its subcellular location is the nucleus. The protein resides in the nuclear pore complex. Functionally, interferon-induced dynamin-like GTPase with potent antiviral activity against human immunodeficiency virus type 1 (HIV-1). Acts by targeting the viral capsid and affects the nuclear uptake and/or stability of the HIV-1 replication complex and the subsequent chromosomal integration of the proviral DNA. Exhibits antiviral activity also against simian immunodeficiency virus (SIV-mnd). May play a role in regulating nucleocytoplasmic transport and cell-cycle progression. This chain is Interferon-induced GTP-binding protein Mx2 (MX2), found in Homo sapiens (Human).